Here is a 207-residue protein sequence, read N- to C-terminus: Ribosomal RNA small subunit methyltransferase G (207 aa).

S-adenosyl-L-methionine-binding positions include Gly-76, Gln-81, 127 to 128 (VE), and Arg-141.

Belongs to the methyltransferase superfamily. RNA methyltransferase RsmG family.

Its subcellular location is the cytoplasm. The catalysed reaction is guanosine(527) in 16S rRNA + S-adenosyl-L-methionine = N(7)-methylguanosine(527) in 16S rRNA + S-adenosyl-L-homocysteine. Specifically methylates the N7 position of guanine in position 527 of 16S rRNA. The polypeptide is Ribosomal RNA small subunit methyltransferase G (Neisseria gonorrhoeae (strain ATCC 700825 / FA 1090)).